Reading from the N-terminus, the 249-residue chain is Putative protein SNX29P2 (249 aa).

Disordered regions lie at residues 109 to 171 (QVTN…SNSW) and 188 to 249 (DVKS…PGFK). Residues 156–170 (SPFGPNSNGSQSSNS) show a composition bias toward low complexity. Acidic residues predominate over residues 193–204 (DDEDVDENEDDV). A compositionally biased stretch (polar residues) spans 226-242 (HSVTQAGVQWHDLSSLQ).

The protein belongs to the sorting nexin family.

This Homo sapiens (Human) protein is Putative protein SNX29P2 (SNX29P2).